A 100-amino-acid polypeptide reads, in one-letter code: uncharacterized protein (100 aa).

A run of 3 helical transmembrane segments spans residues 9–29 (VYTY…SWVV), 41–61 (PYLI…ITAP), and 72–92 (SIPF…FLGI).

Its subcellular location is the membrane. This is an uncharacterized protein from Saccharomyces cerevisiae (strain ATCC 204508 / S288c) (Baker's yeast).